Here is a 691-residue protein sequence, read N- to C-terminus: Two-component response regulator ORR21 (691 aa).

A Response regulatory domain is found at 17 to 132 (KVLVVDDDPT…ELKNIWQHVI (116 aa)). Asp68 carries the post-translational modification 4-aspartylphosphate. A compositionally biased stretch (basic and acidic residues) spans 139–155 (NKEHEHSGSLDDTDRTR). The tract at residues 139-204 (NKEHEHSGSL…DPSSTSKKPR (66 aa)) is disordered. Positions 199-258 (TSKKPRVVWSVELHQQFVNAVNHLGIDKAVPKKILELMNVPGLTRENVASHLQKFRLYLK) form a DNA-binding region, myb-like GARP.

Belongs to the ARR family. Type-B subfamily. In terms of processing, two-component system major event consists of a His-to-Asp phosphorelay between a sensor histidine kinase (HK) and a response regulator (RR). In plants, the His-to-Asp phosphorelay involves an additional intermediate named Histidine-containing phosphotransfer protein (HPt). This multistep phosphorelay consists of a His-Asp-His-Asp sequential transfer of a phosphate group between first a His and an Asp of the HK protein, followed by the transfer to a conserved His of the HPt protein and finally the transfer to an Asp in the receiver domain of the RR protein.

Its subcellular location is the nucleus. Transcriptional activator that binds specific DNA sequence. Functions as a response regulator involved in His-to-Asp phosphorelay signal transduction system. Phosphorylation of the Asp residue in the receiver domain activates the ability of the protein to promote the transcription of target genes. May directly activate some type-A response regulators in response to cytokinins. This chain is Two-component response regulator ORR21, found in Oryza sativa subsp. japonica (Rice).